The sequence spans 398 residues: Na(+)/H(+) antiporter NhaA (398 aa).

12 helical membrane-spanning segments follow: residues 9–29, 57–77, 95–115, 124–144, 154–174, 177–197, 204–224, 226–246, 255–275, 288–308, 329–349, and 359–379; these read MITHPAAGGVLLFAAALAAIV, LSLLVLVNDGLMAVFFLAVGL, AFPAIAALGGMVAPAVIYSLM, AGWAIPAATDIAFAVGVLALL, VFMLALAIIDDLGAIVIIALF, TALEPLALAAAGAVIGIMALM, FLSLYLLLGAVLWGCILLSGI, ATLAGVVVGGLIPLTLPSTEV, WLQPWVVYLILPLFAFANAGI, FLPLGIAAGLVVGKPLGIVLF, IAAAAMLCGIGFTMSIFIANL, and IVLAKVGILSGSVIAALLGYL.

The protein belongs to the NhaA Na(+)/H(+) (TC 2.A.33) antiporter family.

It localises to the cell inner membrane. The enzyme catalyses Na(+)(in) + 2 H(+)(out) = Na(+)(out) + 2 H(+)(in). In terms of biological role, na(+)/H(+) antiporter that extrudes sodium in exchange for external protons. In Sodalis glossinidius (strain morsitans), this protein is Na(+)/H(+) antiporter NhaA.